Here is a 470-residue protein sequence, read N- to C-terminus: Mitogen-activated protein kinase 15 (470 aa).

Residues 13 to 306 (FDLQKRLGKG…VEQCLVHPYV (294 aa)) enclose the Protein kinase domain. ATP-binding positions include 19–27 (LGKGAYGIV) and Lys42. The active-site Proton acceptor is Asp137. Phosphothreonine is present on Thr178. The TXY motif lies at 178–180 (TEY). Tyr180 is subject to Phosphotyrosine. The disordered stretch occupies residues 362–445 (PYGEDKSRAP…PSSIKQRRRS (84 aa)). Positions 394–406 (MDKNNSSSHDSSS) are enriched in low complexity. Positions 409-426 (LRERAASAESRTSKDSNG) are enriched in basic and acidic residues.

It belongs to the protein kinase superfamily. CMGC Ser/Thr protein kinase family. MAP kinase subfamily. Mg(2+) serves as cofactor. In terms of processing, dually phosphorylated on Thr-178 and Tyr-180, which activates the enzyme. As to expression, expressed in the URX neuron and in many other head sensory neurons. Isoform a: Expressed in head and tail ciliated sensory neurons, and in mid-body neurons. Isoform c: Expressed in head and tail ciliated sensory neurons, and in mid-body neurons.

It localises to the cell projection. The protein localises to the cilium. The protein resides in the cilium membrane. It is found in the cytoplasm. Its subcellular location is the cytoskeleton. It localises to the cilium axoneme. The protein localises to the cilium basal body. The protein resides in the cell junction. It is found in the perikaryon. Its subcellular location is the dendrite. It catalyses the reaction L-seryl-[protein] + ATP = O-phospho-L-seryl-[protein] + ADP + H(+). It carries out the reaction L-threonyl-[protein] + ATP = O-phospho-L-threonyl-[protein] + ADP + H(+). Activated by threonine and tyrosine phosphorylation. Atypical MAPK protein. Regulates primary cilium formation in sensory neurons and the localization of ciliary proteins involved in cilium structure, transport, and signaling. Acts in dopamine (DA) neurons to support synaptic membrane dat-1 availability via activation of rho-1 thereby sustaining normal levels of DA clearance. Plays a role in male mating behavior, probably in part through regulating the localization of the polycystin pkd-2. Functions postembryonically in the URX sensory neurons to constrain URX dendrite growth throughout lifetime, probably by restricting expansion of the subcellular sensory compartment at the dendrite ending. The polypeptide is Mitogen-activated protein kinase 15 (Caenorhabditis elegans).